The following is a 572-amino-acid chain: Hemagglutinin-neuraminidase (572 aa).

Residues 1 to 31 (MEYWKHTNHGKDAGNELETSMATHGNKLTNK) are Intravirion-facing. A helical membrane pass occupies residues 32–52 (IIYILWTIILVLLSIVFIIVL). At 53-572 (INSIKSEKAH…FKTEIPKSCS (520 aa)) the chain is on the virion surface side. 2 disulfides stabilise this stretch: C190/C214 and C256/C269. The interval 252–257 (NRKSCS) is involved in neuraminidase activity. N308 and N351 each carry an N-linked (GlcNAc...) asparagine; by host glycan. Intrachain disulfides connect C355–C469 and C463–C473. N-linked (GlcNAc...) asparagine; by host glycosylation is present at N523. C535 and C544 are joined by a disulfide.

It belongs to the paramyxoviruses hemagglutinin-neuraminidase family. Homotetramer; composed of disulfide-linked homodimers. Interacts with F protein trimer.

The protein localises to the virion membrane. It localises to the host cell membrane. The enzyme catalyses Hydrolysis of alpha-(2-&gt;3)-, alpha-(2-&gt;6)-, alpha-(2-&gt;8)- glycosidic linkages of terminal sialic acid residues in oligosaccharides, glycoproteins, glycolipids, colominic acid and synthetic substrates.. Its function is as follows. Attaches the virus to sialic acid-containing cell receptors and thereby initiating infection. Binding of HN protein to the receptor induces a conformational change that allows the F protein to trigger virion/cell membranes fusion. In terms of biological role, neuraminidase activity ensures the efficient spread of the virus by dissociating the mature virions from the neuraminic acid containing glycoproteins. This Homo sapiens (Human) protein is Hemagglutinin-neuraminidase (HN).